We begin with the raw amino-acid sequence, 386 residues long: Alpha-D-kanosaminyltransferase (386 aa).

The protein belongs to the glycosyltransferase group 1 family.

It catalyses the reaction 2'-deamino-2'-hydroxyneamine + UDP-alpha-D-kanosamine = kanamycin A + UDP + H(+). It carries out the reaction neamine + UDP-alpha-D-kanosamine = kanamycin B + UDP + H(+). The catalysed reaction is paromamine + UDP-alpha-D-kanosamine = kanamycin C + UDP + H(+). The enzyme catalyses 2'-deamino-2'-hydroxyparomamine + UDP-alpha-D-kanosamine = kanamycin X + UDP + H(+). It participates in antibiotic biosynthesis; kanamycin biosynthesis. Functionally, glycosyltransferase involved in the biosynthesis of kanamycins by catalyzing the transfer of the hexose kanosamine from UDP-alpha-D-kanosamine to disaccharide precursors. Can also use UDP-alpha-D-glucose as sugar donor with much lower efficiency. In Streptomyces kanamyceticus, this protein is Alpha-D-kanosaminyltransferase (kanE).